The following is a 348-amino-acid chain: D-lactate dehydrogenase kk1H (348 aa).

NAD(+) contacts are provided by residues 158-159 (RI), D178, 208-209 (CP), 235-237 (TSR), and D261. R237 is an active-site residue. The active site involves E266. H298 serves as the catalytic Proton donor.

Belongs to the D-isomer specific 2-hydroxyacid dehydrogenase family.

The protein operates within secondary metabolite biosynthesis. D-lactate dehydrogenase; part of the gene cluster that mediates the biosynthesis of KK-1, a novel cyclic depsipeptide with 10 residues which is a promising active compound with high activity against many plant pathogens, especially Botrytis cinerea. Within the pathway, kk1H catalyzes in the synthesis of D-lactic acid from pyruvic acid, which is recognized by the A domain of the first kk1B module. The nonribosomal peptide synthetase (NRPS) kk1B catalyzes the elongation and cyclization of the decapeptide chain composed of 1 D-lactic acid residue (D-Lac), 1 pipecolic acid residue (Pip), 1 aspartic acid residue (Asp), 1 isoleucine residue (Ile), 1 glycine residue (Gly), 1 tyrosine residue (Tyr) and 4 valine residues (Val). The Asp, Ile and 3 Val residues are N-methylated by the 5 methyltransferase domains from the NRPS (found in modules 3, 5, 6, 7 and 9), whereas the Tyr residue is O-methylated by the cluster encoded O-methyltransferase kk1A. The thioesterase kk1J is likely to be involved in the corrective mechanism of peptide chain synthesis. The D-lactate dehydrogenase kk1H is involved in the synthesis of D-lactic acid from pyruvic acid, which is recognized by the A domain of the first kk1B module. The pyrroline-5-carboxylate reductase kk1I is involved in the synthesis of the L-pipecolic acid residue of KK-1 from delta-1-pyrroline-5-carboxylate (P5C), a metabolic intermediate of lysine. It still is unclear how kk1C and kk1D are involved in the production of KK-1. The chain is D-lactate dehydrogenase kk1H from Curvularia clavata.